A 105-amino-acid chain; its full sequence is MRIKKGDLVEVISGKDKGKRGKVLRVIPKENKVIVENVNMVKRHQRPIPQLREGGIIEREAPIYASKVMVVCPACDKRTRVGYRFTEDGKKVRYCKKCGEIIDKD.

Belongs to the universal ribosomal protein uL24 family. In terms of assembly, part of the 50S ribosomal subunit.

In terms of biological role, one of two assembly initiator proteins, it binds directly to the 5'-end of the 23S rRNA, where it nucleates assembly of the 50S subunit. One of the proteins that surrounds the polypeptide exit tunnel on the outside of the subunit. The protein is Large ribosomal subunit protein uL24 of Thermotoga petrophila (strain ATCC BAA-488 / DSM 13995 / JCM 10881 / RKU-1).